The chain runs to 209 residues: Mediator of RNA polymerase II transcription subunit 20 (209 aa).

It belongs to the Mediator complex subunit 20 family. As to quaternary structure, component of the Mediator complex.

It is found in the nucleus. Functionally, component of the Mediator complex, a coactivator involved in the regulated transcription of nearly all RNA polymerase II-dependent genes. Mediator functions as a bridge to convey information from gene-specific regulatory proteins to the basal RNA polymerase II transcription machinery. Mediator is recruited to promoters by direct interactions with regulatory proteins and serves as a scaffold for the assembly of a functional preinitiation complex with RNA polymerase II and the general transcription factors. The polypeptide is Mediator of RNA polymerase II transcription subunit 20 (SRB2) (Eremothecium gossypii (strain ATCC 10895 / CBS 109.51 / FGSC 9923 / NRRL Y-1056) (Yeast)).